Here is a 437-residue protein sequence, read N- to C-terminus: Aminopeptidase G (437 aa).

Active-site residues include cysteine 70, histidine 361, and asparagine 382.

It belongs to the peptidase C1 family.

It localises to the cytoplasm. This chain is Aminopeptidase G (pepG), found in Lactobacillus delbrueckii subsp. lactis.